Here is a 209-residue protein sequence, read N- to C-terminus: Large ribosomal subunit protein uL3 (209 aa).

Positions 121 to 154 (GGIKRHNFHRGPMAHGSKYHRRPGSSAAKGPART) are disordered.

Belongs to the universal ribosomal protein uL3 family. Part of the 50S ribosomal subunit. Forms a cluster with proteins L14 and L19.

In terms of biological role, one of the primary rRNA binding proteins, it binds directly near the 3'-end of the 23S rRNA, where it nucleates assembly of the 50S subunit. In Desulforamulus reducens (strain ATCC BAA-1160 / DSM 100696 / MI-1) (Desulfotomaculum reducens), this protein is Large ribosomal subunit protein uL3.